A 347-amino-acid chain; its full sequence is MQIKQNISLKPYHTFAIEQCSHYLVEVGSVDELVDIYANPDFRELPKLILGSGSNVLFTQPFSGVVVVNRLSGKTLSEDESFYYIHAEGGEDWPNLVEWCVQQGIGGLENLALIPGCAGSAPIQNIGAYGVEFKDVCQYVDILMLDDFSQRRLSAEECQFGYRDSVFKHALYNQCVVIAVGLKLPKTWQANNSYGPLQEIAEHELSPMSIFHKVCEVRREKLPDPKQIGNAGSFFKNPIIDKAHWQQLKAQFPNIVAYPAGEQMKVAAGWLIDQCDFKGVQVGGAQVHPKQALVLTNAQSCTAQDIIQLASLICDAVWDKYQIALEHEVRFISTVGETCLSELRVES.

In terms of domain architecture, FAD-binding PCMH-type spans 16 to 187 (AIEQCSHYLV…IAVGLKLPKT (172 aa)). The active site involves R163. S233 functions as the Proton donor in the catalytic mechanism. The active site involves E328.

It belongs to the MurB family. The cofactor is FAD.

It is found in the cytoplasm. It carries out the reaction UDP-N-acetyl-alpha-D-muramate + NADP(+) = UDP-N-acetyl-3-O-(1-carboxyvinyl)-alpha-D-glucosamine + NADPH + H(+). The protein operates within cell wall biogenesis; peptidoglycan biosynthesis. Functionally, cell wall formation. In Vibrio vulnificus (strain CMCP6), this protein is UDP-N-acetylenolpyruvoylglucosamine reductase.